Here is a 425-residue protein sequence, read N- to C-terminus: Nicotinate dehydrogenase large molybdopterin subunit (425 aa).

Se-Mo-molybdopterin cytosine dinucleotide contacts are provided by residues glutamine 208 and 238 to 240 (GFG).

It belongs to the xanthine dehydrogenase family. As to quaternary structure, heterooctamer of NDHM, NDHL, NDHS and NDHF. Dimer of heterotetramers. Se-Mo-molybdopterin cytosine dinucleotide serves as cofactor.

The catalysed reaction is nicotinate + NADP(+) + H2O = 6-hydroxynicotinate + NADPH + H(+). Its pathway is cofactor degradation; nicotinate degradation; 6-hydroxynicotinate from nicotinate: step 1/1. Its activity is regulated as follows. Reversibly inactivated by selenide and sulfide. Not inhibited by cyanide. In terms of biological role, catalyzes the hydroxylation of nicotinate to 6-hydroxynicotinate. Also active against 2-pyrazinecarboxylic acid, but inactive against other nicotinate analogs. This is Nicotinate dehydrogenase large molybdopterin subunit (ndhL) from Eubacterium barkeri (Clostridium barkeri).